We begin with the raw amino-acid sequence, 54 residues long: Apelin receptor early endogenous ligand (54 aa).

Positions Met-1–Gln-23 are cleaved as a signal peptide.

This sequence belongs to the Elabela/Toddler family. As to quaternary structure, interacts with APLNR. As to expression, expressed in the placenta. Expressed in syncytiotrophoblasts of the placenta labyrinth at 10.5 dpc. Expressed in placental chorionic trophoblasts (at protein level). Expressed in a small population of epiblast cells in the distal half of the embryo at 7 dpc. Expressed in newly formed definitive endoderm cells in the proximal half of the embryo, while it is not present in extra-embryonic endoderm at 7.5 dpc. This expression pattern then changes to the ventral aspect of the developing foregut pocket and the entire hindgut pocket at 8.5 dpc, before becoming restricted to the foregut overlying the heart and the posterior-most hindgut. Not detected in endothelial precursor cells of the yolk sac at 8 dpc. Expressed in extraembryonic tissues as well as in the chorion at 8.25 dpc. Expressed in endometrial stroma of the uterus of pregnant mice at 8.5 dpc. Expressed in the developing heart, caudal neural tube and trophobasts at 9 dpc. Expressed in the chorionic plate of the chorioallantoic placenta at 9 dpc. Expressed in the posterior half of the ventral neural tube at 9.25 dpc. Expressed in trophoblast cells at the periphery of the placenta at 9.5 dpc. Expressed in collecting ducts of the kidney of pregnant mice at 10.5 dpc. Expressed in the epicardium of the developing heart at 11.5 dpc. Expressed weakly in the adult heart. Expressed in endothelial cells and fibroblasts and weakly in cardiomyocytes.

The protein localises to the secreted. The protein resides in the extracellular space. Its function is as follows. Peptide hormone that functions as endogenous ligand for the G-protein-coupled apelin receptor (APLNR/APJ), that plays a role in the regulation of normal cardiovascular function and fluid homeostasis. Functions as a balanced agonist activating both G(i) protein pathway and beta-arrestin pathway of APLNR. Downstream G proteins activation, apelin can inhibit cAMP production and activate key intracellular effectors such as ERKs. On the other hand, APLNR activation induces beta-arrestin recruitment to the membrane leading to desensitization and internalization of the receptor. Required for mesendodermal differentiation, blood vessels formation and heart morphogenesis during early development and for adult cardiovascular homeostasis. Acts as a motogen by promoting mesendodermal cell migration during gastrulation by binding and activating APLNR. Acts as an early embryonic regulator of cellular movement with a role in migration and development of cardiac progenitor cells. May act as a chemoattractant for the activation of angioblast migration toward the embryonic midline, i.e. the position of the future vessel formation, during vasculogenesis. Positively regulates sinus venosus (SV)-derived endothelial cells migration into the developing heart to promote coronary blood vessel sprouting. Plays a role in placental vascular development; promotes placental trophoblast invasion and spiral artery remodeling in the uterus. Involved in the regulation of maternal cardiovascular homeostasis to prevent gestational hypertension and for potent cardioprotective functions during heart failure. Mediates myocardial contractility in an ERK1/2-dependent manner. The protein is Apelin receptor early endogenous ligand of Mus musculus (Mouse).